The sequence spans 587 residues: Aspartate--tRNA ligase (587 aa).

Glutamate 173 is a binding site for L-aspartate. The segment at 197-200 is aspartate; that stretch reads QTLK. Arginine 219 contacts L-aspartate. ATP is bound by residues 219 to 221 and glutamine 228; that span reads RDE. Histidine 446 is a binding site for L-aspartate. Glutamate 480 contributes to the ATP binding site. Position 487 (arginine 487) interacts with L-aspartate. 532–535 contributes to the ATP binding site; it reads GLDR.

Belongs to the class-II aminoacyl-tRNA synthetase family. Type 1 subfamily. In terms of assembly, homodimer.

The protein localises to the cytoplasm. The catalysed reaction is tRNA(Asp) + L-aspartate + ATP = L-aspartyl-tRNA(Asp) + AMP + diphosphate. Its function is as follows. Catalyzes the attachment of L-aspartate to tRNA(Asp) in a two-step reaction: L-aspartate is first activated by ATP to form Asp-AMP and then transferred to the acceptor end of tRNA(Asp). This Bacteroides thetaiotaomicron (strain ATCC 29148 / DSM 2079 / JCM 5827 / CCUG 10774 / NCTC 10582 / VPI-5482 / E50) protein is Aspartate--tRNA ligase.